Reading from the N-terminus, the 502-residue chain is Probable cytosol aminopeptidase (502 aa).

Mn(2+) contacts are provided by lysine 254 and aspartate 259. Residue lysine 266 is part of the active site. Residues aspartate 277, aspartate 336, and glutamate 338 each contribute to the Mn(2+) site. Residue arginine 340 is part of the active site.

The protein belongs to the peptidase M17 family. The cofactor is Mn(2+).

The protein localises to the cytoplasm. The catalysed reaction is Release of an N-terminal amino acid, Xaa-|-Yaa-, in which Xaa is preferably Leu, but may be other amino acids including Pro although not Arg or Lys, and Yaa may be Pro. Amino acid amides and methyl esters are also readily hydrolyzed, but rates on arylamides are exceedingly low.. It carries out the reaction Release of an N-terminal amino acid, preferentially leucine, but not glutamic or aspartic acids.. Its function is as follows. Presumably involved in the processing and regular turnover of intracellular proteins. Catalyzes the removal of unsubstituted N-terminal amino acids from various peptides. This is Probable cytosol aminopeptidase from Tropheryma whipplei (strain TW08/27) (Whipple's bacillus).